A 642-amino-acid chain; its full sequence is Threonine--tRNA ligase (642 aa).

Residues 1–63 form the TGS domain; it reads MSTVTVTLPD…TADVELEIVT (63 aa). The tract at residues 242-533 is catalytic; sequence DHRKIGQEMD…LTEHYNGKFP (292 aa). 3 residues coordinate Zn(2+): Cys-334, His-385, and His-510.

The protein belongs to the class-II aminoacyl-tRNA synthetase family. As to quaternary structure, homodimer. Zn(2+) serves as cofactor.

Its subcellular location is the cytoplasm. It carries out the reaction tRNA(Thr) + L-threonine + ATP = L-threonyl-tRNA(Thr) + AMP + diphosphate + H(+). Catalyzes the attachment of threonine to tRNA(Thr) in a two-step reaction: L-threonine is first activated by ATP to form Thr-AMP and then transferred to the acceptor end of tRNA(Thr). In Haloarcula marismortui (strain ATCC 43049 / DSM 3752 / JCM 8966 / VKM B-1809) (Halobacterium marismortui), this protein is Threonine--tRNA ligase.